The primary structure comprises 90 residues: Cell division topological specificity factor (90 aa).

The disordered stretch occupies residues 1–21 (MAGFWSKIFGNDEKPSSAQTA). The segment covering 10–21 (GNDEKPSSAQTA) has biased composition (basic and acidic residues).

The protein belongs to the MinE family.

In terms of biological role, prevents the cell division inhibition by proteins MinC and MinD at internal division sites while permitting inhibition at polar sites. This ensures cell division at the proper site by restricting the formation of a division septum at the midpoint of the long axis of the cell. This Acinetobacter baylyi (strain ATCC 33305 / BD413 / ADP1) protein is Cell division topological specificity factor.